We begin with the raw amino-acid sequence, 338 residues long: Methionine import ATP-binding protein MetN 2 (338 aa).

Residues 2-242 (IEIEKVCVDF…PQHAFTQQLV (241 aa)) form the ABC transporter domain. Residue 39–46 (GTSGAGKS) coordinates ATP.

The protein belongs to the ABC transporter superfamily. Methionine importer (TC 3.A.1.24) family. As to quaternary structure, the complex is composed of two ATP-binding proteins (MetN), two transmembrane proteins (MetI) and a solute-binding protein (MetQ).

It is found in the cell inner membrane. It carries out the reaction L-methionine(out) + ATP + H2O = L-methionine(in) + ADP + phosphate + H(+). It catalyses the reaction D-methionine(out) + ATP + H2O = D-methionine(in) + ADP + phosphate + H(+). Part of the ABC transporter complex MetNIQ involved in methionine import. Responsible for energy coupling to the transport system. The chain is Methionine import ATP-binding protein MetN 2 from Salmonella choleraesuis (strain SC-B67).